We begin with the raw amino-acid sequence, 357 residues long: DNA replication and repair protein RecF (357 aa).

ATP is bound at residue 30–37 (GANGSGKT).

It belongs to the RecF family.

The protein localises to the cytoplasm. In terms of biological role, the RecF protein is involved in DNA metabolism; it is required for DNA replication and normal SOS inducibility. RecF binds preferentially to single-stranded, linear DNA. It also seems to bind ATP. The polypeptide is DNA replication and repair protein RecF (Cronobacter sakazakii (strain ATCC BAA-894) (Enterobacter sakazakii)).